Here is a 340-residue protein sequence, read N- to C-terminus: Tetraacyldisaccharide 4'-kinase (340 aa).

51 to 58 (HMGGAGKT) is an ATP binding site.

This sequence belongs to the LpxK family.

The catalysed reaction is a lipid A disaccharide + ATP = a lipid IVA + ADP + H(+). The protein operates within glycolipid biosynthesis; lipid IV(A) biosynthesis; lipid IV(A) from (3R)-3-hydroxytetradecanoyl-[acyl-carrier-protein] and UDP-N-acetyl-alpha-D-glucosamine: step 6/6. Functionally, transfers the gamma-phosphate of ATP to the 4'-position of a tetraacyldisaccharide 1-phosphate intermediate (termed DS-1-P) to form tetraacyldisaccharide 1,4'-bis-phosphate (lipid IVA). The polypeptide is Tetraacyldisaccharide 4'-kinase (Rhodopseudomonas palustris (strain ATCC BAA-98 / CGA009)).